A 775-amino-acid polypeptide reads, in one-letter code: Metal transporter CNNM4 (775 aa).

Topologically, residues 1-178 are extracellular; sequence MAPVGGGGRP…LLFMVEEPGR (178 aa). Residues asparagine 85 and asparagine 122 are each glycosylated (N-linked (GlcNAc...) asparagine). The CNNM transmembrane domain maps to 178 to 358; the sequence is RFLPLWLHIL…EPYNDLVKEE (181 aa). The helical transmembrane segment at 179–199 threads the bilayer; sequence FLPLWLHILLITVLLVLSGIF. At 200–240 the chain is on the cytoplasmic side; sequence SGLNLGLMALDPMELRIVQNCGTEKERRYARKIEPIRRKGN. Positions 241 to 261 form an intramembrane region, helical; that stretch reads YLLCSLLLGNVLVNTSLTILL. Residues 262-264 lie on the Cytoplasmic side of the membrane; sequence DNL. Residues 265 to 285 form a helical membrane-spanning segment; the sequence is IGSGLMAVASSTIGIVIFGEI. Residues 286 to 293 lie on the Extracellular side of the membrane; sequence LPQALCSR. Residues 294 to 316 form a helical membrane-spanning segment; sequence HGLAVGANTILLTKFFMLLTFPL. The Cytoplasmic portion of the chain corresponds to 317-775; the sequence is SFPISKLLDF…LHKASHENAI (459 aa). CBS domains lie at 377–438 and 445–511; these read MTQL…CTPL and YNHP…ILDE. Phosphoserine occurs at positions 660, 664, and 770.

It belongs to the ACDP family. Interacts with COX11. Widely expressed. Highly expressed in heart.

Its subcellular location is the cell membrane. Probable metal transporter. The interaction with the metal ion chaperone COX11 suggests that it may play a role in sensory neuron functions. May play a role in biomineralization and retinal function. The sequence is that of Metal transporter CNNM4 (CNNM4) from Homo sapiens (Human).